Here is a 438-residue protein sequence, read N- to C-terminus: Fibrous sheath-interacting protein 1 (438 aa).

Residues M1–E111 are disordered. A compositionally biased stretch (low complexity) spans S18–S32. The segment covering S53–D72 has biased composition (basic and acidic residues). A phosphoserine mark is found at S71, S88, and S89. Residues L131–K157 are a coiled coil. The disordered stretch occupies residues S354–E390. Composition is skewed to basic and acidic residues over residues G359–T371 and K378–E390.

The protein belongs to the FSIP1 family.

The polypeptide is Fibrous sheath-interacting protein 1 (Fsip1) (Rattus norvegicus (Rat)).